A 525-amino-acid polypeptide reads, in one-letter code: tRNA(Ile)-lysidine synthase (525 aa).

32–37 is an ATP binding site; it reads SGGRDS.

It belongs to the tRNA(Ile)-lysidine synthase family.

It is found in the cytoplasm. The enzyme catalyses cytidine(34) in tRNA(Ile2) + L-lysine + ATP = lysidine(34) in tRNA(Ile2) + AMP + diphosphate + H(+). Ligates lysine onto the cytidine present at position 34 of the AUA codon-specific tRNA(Ile) that contains the anticodon CAU, in an ATP-dependent manner. Cytidine is converted to lysidine, thus changing the amino acid specificity of the tRNA from methionine to isoleucine. This Psychrobacter sp. (strain PRwf-1) protein is tRNA(Ile)-lysidine synthase.